The chain runs to 541 residues: Chaperonin GroEL (541 aa).

ATP is bound by residues 29–32 (TLGP), 86–90 (DGTTT), glycine 413, and aspartate 494.

The protein belongs to the chaperonin (HSP60) family. As to quaternary structure, forms a cylinder of 14 subunits composed of two heptameric rings stacked back-to-back. Interacts with the co-chaperonin GroES.

It is found in the cytoplasm. It carries out the reaction ATP + H2O + a folded polypeptide = ADP + phosphate + an unfolded polypeptide.. Functionally, together with its co-chaperonin GroES, plays an essential role in assisting protein folding. The GroEL-GroES system forms a nano-cage that allows encapsulation of the non-native substrate proteins and provides a physical environment optimized to promote and accelerate protein folding. The polypeptide is Chaperonin GroEL (Acetivibrio thermocellus (strain ATCC 27405 / DSM 1237 / JCM 9322 / NBRC 103400 / NCIMB 10682 / NRRL B-4536 / VPI 7372) (Clostridium thermocellum)).